A 396-amino-acid polypeptide reads, in one-letter code: Flavohemoprotein (396 aa).

The Globin domain maps to 1–136 (MLDNQTIATV…LADIFINREE (136 aa)). Residue H85 participates in heme b binding. Active-site charge relay system residues include Y95 and E135. Positions 147-396 (GGWRGLRPFR…YECFGPHKVI (250 aa)) are reductase. The FAD-binding FR-type domain maps to 150–255 (RGLRPFRINR…TAPRGDFFLD (106 aa)). Residues Y188 and 204-207 (RQYS) contribute to the FAD site. Residue 268-273 (GVGLTP) coordinates NADP(+). Residue 389–392 (CFGP) coordinates FAD.

This sequence belongs to the globin family. Two-domain flavohemoproteins subfamily. It in the C-terminal section; belongs to the flavoprotein pyridine nucleotide cytochrome reductase family. Requires heme b as cofactor. FAD serves as cofactor.

The catalysed reaction is 2 nitric oxide + NADPH + 2 O2 = 2 nitrate + NADP(+) + H(+). It catalyses the reaction 2 nitric oxide + NADH + 2 O2 = 2 nitrate + NAD(+) + H(+). In terms of biological role, is involved in NO detoxification in an aerobic process, termed nitric oxide dioxygenase (NOD) reaction that utilizes O(2) and NAD(P)H to convert NO to nitrate, which protects the bacterium from various noxious nitrogen compounds. Therefore, plays a central role in the inducible response to nitrosative stress. The protein is Flavohemoprotein of Photorhabdus laumondii subsp. laumondii (strain DSM 15139 / CIP 105565 / TT01) (Photorhabdus luminescens subsp. laumondii).